The sequence spans 190 residues: CASP-like protein 5A3 (190 aa).

Composition is skewed to low complexity over residues 1-12 (MRASRPAVHPVE) and 20-31 (AAAEGPEAQVEG). The disordered stretch occupies residues 1–31 (MRASRPAVHPVEAAPPPPAAAAEGPEAQVEG). Over 1–50 (MRASRPAVHPVEAAPPPPAAAAEGPEAQVEGAAHPRGVRMKDPPGAPGTP) the chain is Cytoplasmic. A helical transmembrane segment spans residues 51–71 (AGLGLRLAQAFFAAAALAVMA). Over 72–81 (STNDFPSVSA) the chain is Extracellular. Residues 82-102 (FSYLVAAAILQCLWSLLLAFV) form a helical membrane-spanning segment. At 103–126 (DIYALLVKRSLRNARAVCIFTIGD) the chain is on the cytoplasmic side. The chain crosses the membrane as a helical span at residues 127 to 147 (GITGTITLGAACASAGITVLI). Residues 148-164 (GNDLNICAENHCASFET) lie on the Extracellular side of the membrane. The helical transmembrane segment at 165–185 (ATALAFISWFALAPSCILNFW) threads the bilayer. Over 186-190 (SMASR) the chain is Cytoplasmic.

The protein belongs to the Casparian strip membrane proteins (CASP) family. Homodimer and heterodimers.

The protein localises to the cell membrane. The polypeptide is CASP-like protein 5A3 (Zea mays (Maize)).